Reading from the N-terminus, the 514-residue chain is Transmembrane protein 117 (514 aa).

Over 1–15 (MGKDFRYYFQHPWSR) the chain is Cytoplasmic. The helical transmembrane segment at 16–36 (MIVAYLVIFFNFLIFAEDPVS) threads the bilayer. Residues 37-65 (HSQTEANVIVVGNCFSFVTNKYPRGVGWR) lie on the Extracellular side of the membrane. A helical transmembrane segment spans residues 66–86 (ILKVLLWLLAILTGLIAGKFL). Over 87–110 (FHQRLFGQLLRLKMFREDHGSWMT) the chain is Cytoplasmic. A helical membrane pass occupies residues 111-131 (MFFSTILFLFIFSHIYNTILL). Over 132 to 154 (MDGNMGAYIITDYMGIRNESFMK) the chain is Extracellular. The helical transmembrane segment at 155–175 (LAAVGTWMGDFVTAWMVTDMM) threads the bilayer. Residues 176-198 (LQDKPYPDWGKSARAFWKKGNVR) are Cytoplasmic-facing. The chain crosses the membrane as a helical span at residues 199-219 (ITLFWTVLFTLTSVVVLVITT). Topologically, residues 220–239 (DWISWDKLNRGFLPSDEVSR) are extracellular. A helical membrane pass occupies residues 240–260 (AFLASFILVFDLLIVMQDWEF). Topologically, residues 261 to 295 (PHFMGDVDVNLPGLHTPHMQFKIPFFQKIFKEEYR) are cytoplasmic. Residues 296–316 (IHITGKWFNYGIIFLVLILDL) traverse the membrane as a helical segment. Residues 317–394 (NMWKNQIFYK…FIGASLDVKC (78 aa)) lie on the Extracellular side of the membrane. N-linked (GlcNAc...) asparagine glycans are attached at residues Asn353 and Asn371. A helical membrane pass occupies residues 395 to 415 (LAFVPSLIAFVWFGFFIWFFG). At 416 to 514 (RFLKNEPRME…PTTSKSTPTN (99 aa)) the chain is on the cytoplasmic side. 2 disordered regions span residues 429–459 (KTYT…SVED) and 486–514 (ENLS…TPTN). The segment covering 438-448 (SPSEHSKDMGI) has biased composition (basic and acidic residues). Thr453 bears the Phosphothreonine mark.

This sequence belongs to the TMEM117 family.

Its subcellular location is the cell membrane. In terms of biological role, involved in endoplasmic reticulum (ER) stress-induced cell death pathway. The protein is Transmembrane protein 117 (TMEM117) of Homo sapiens (Human).